We begin with the raw amino-acid sequence, 777 residues long: Glucocorticoid receptor (777 aa).

The segment covering 1 to 14 has biased composition (basic and acidic residues); it reads MDSKESLTPGKEEN. A disordered region spans residues 1-23; the sequence is MDSKESLTPGKEENPSSVLTQER. The modulating stretch occupies residues 1 to 420; the sequence is MDSKESLTPG…TATTGPPPKL (420 aa). At threonine 8 the chain carries Phosphothreonine. Arginine 23 is modified (omega-N-methylarginine). Phosphoserine occurs at positions 45, 113, 134, and 141. The tract at residues 130–182 is disordered; sequence NRSTSVPENPKSSASSSVSAAPKEKEFPKTHSDVSSEQQNLKGQTGTNGGNVK. Residues 134–150 are compositionally biased toward low complexity; the sequence is SVPENPKSSASSSVSAA. Residues 151 to 163 are compositionally biased toward basic and acidic residues; that stretch reads PKEKEFPKTHSDV. A compositionally biased stretch (polar residues) spans 164–174; sequence SSEQQNLKGQT. 3 positions are modified to phosphoserine: serine 203, serine 211, and serine 226. Residue lysine 258 forms a Glycyl lysine isopeptide (Lys-Gly) (interchain with G-Cter in SUMO2) linkage. At serine 267 the chain carries Phosphoserine. Residues lysine 277 and lysine 293 each participate in a glycyl lysine isopeptide (Lys-Gly) (interchain with G-Cter in SUMO); alternate cross-link. Residues lysine 277 and lysine 293 each participate in a glycyl lysine isopeptide (Lys-Gly) (interchain with G-Cter in SUMO2); alternate cross-link. Residues 394-414 show a composition bias toward low complexity; sequence SSPSMRPDVSSPPSSSSTATT. A disordered region spans residues 394 to 415; it reads SSPSMRPDVSSPPSSSSTATTG. A Phosphoserine modification is found at serine 404. A Glycyl lysine isopeptide (Lys-Gly) (interchain with G-Cter in ubiquitin) cross-link involves residue lysine 419. NR C4-type zinc fingers lie at residues 421–441 and 457–481; these read CLVC…CGSC and CAGR…YRKC. The segment at residues 421–486 is a DNA-binding region (nuclear receptor); sequence CLVCSDEASG…RYRKCLQAGM (66 aa). Lysine 480, lysine 492, lysine 494, and lysine 495 each carry N6-acetyllysine. Residues 485-777 form an interaction with CLOCK region; it reads GMNLEARKTK…NIKKLLFHQK (293 aa). Positions 487-523 are hinge; it reads NLEARKTKKKIKGIQQATTGVSQETSENPANKTIVPA. One can recognise an NR LBD domain in the interval 524-758; the sequence is TLPQLTPTLV…FPEMLAEIIT (235 aa). Residues 532 to 697 are interaction with CRY1; the sequence is LVSLLEVIEP…EIRMTYIKEL (166 aa). Lysine 703 participates in a covalent cross-link: Glycyl lysine isopeptide (Lys-Gly) (interchain with G-Cter in SUMO).

Belongs to the nuclear hormone receptor family. NR3 subfamily. Heteromultimeric cytoplasmic complex with HSP90AA1, HSPA1A/HSPA1B, and FKBP5 or another immunophilin such as PPID, STIP1, or the immunophilin homolog PPP5C. Upon ligand binding FKBP5 dissociates from the complex and FKBP4 takes its place, thereby linking the complex to dynein and mediating transport to the nucleus, where the complex dissociates. Probably forms a complex composed of chaperones HSP90 and HSP70, co-chaperones CDC37, PPP5C, TSC1 and client protein TSC2, CDK4, AKT, RAF1 and NR3C1; this complex does not contain co-chaperones STIP1/HOP and PTGES3/p23. Directly interacts with UNC45A. Binds to DNA as a homodimer, and as heterodimer with NR3C2 or the retinoid X receptor. Binds STAT5A and STAT5B homodimers and heterodimers. Interacts with NRIP1, POU2F1, POU2F2 and TRIM28. Interacts with several coactivator complexes, including the SMARCA4 complex, CREBBP/EP300, TADA2L (Ada complex) and p160 coactivators such as NCOA2 and NCOA6. Interaction with BAG1 inhibits transactivation. Interacts with HEXIM1 and TGFB1I1. Interacts with NCOA1. Interacts with NCOA3, SMARCA4, SMARCC1, SMARCD1, and SMARCE1. Interacts with CLOCK, CRY1 and CRY2 in a ligand-dependent fashion. Interacts with CIART. Interacts with RWDD3. Interacts with UBE2I/UBC9 and this interaction is enhanced in the presence of RWDD3. Interacts with GRIP1. Interacts with NR4A3 (via nuclear receptor DNA-binding domain), represses transcription activity of NR4A3 on the POMC promoter Nur response element (NurRE). Directly interacts with PNRC2 to attract and form a complex with UPF1 and DCP1A; the interaction leads to rapid mRNA degradation. Interacts with GSK3B. Interacts with FNIP1 and FNIP2. Interacts (via C-terminus) with HNRNPU (via C-terminus). Interacts with MCM3AP. Interacts (via domain NR LBD) with HSP90AA1 and HSP90AB1. In the absence of hormonal ligand, interacts with TACC1. Interacts (via NR LBD domain) with ZNF764 (via KRAB domain); the interaction regulates transcription factor activity of NR3C1 by directing its actions toward certain biologic pathways. Acetylation by CLOCK reduces its binding to glucocorticoid response elements and its transcriptional activity. In terms of processing, increased proteasome-mediated degradation in response to glucocorticoids. Post-translationally, phosphorylated in the absence of hormone; becomes hyperphosphorylated in the presence of glucocorticoid. The Ser-203, Ser-226 and Ser-404-phosphorylated forms are mainly cytoplasmic, and the Ser-211-phosphorylated form is nuclear. Phosphorylation at Ser-211 increases transcriptional activity. Phosphorylation at Ser-203, Ser-226 and Ser-404 decreases signaling capacity. Phosphorylation at Ser-404 may protect from glucocorticoid-induced apoptosis. Phosphorylation at Ser-203 and Ser-211 is not required in regulation of chromosome segregation. May be dephosphorylated by PPP5C, attenuates NR3C1 action. Ubiquitinated by UBR5, leading to its degradation: UBR5 specifically recognizes and binds ligand-bound NR3C1 when it is not associated with coactivators (NCOAs). In presence of NCOAs, the UBR5-degron is not accessible, preventing its ubiquitination and degradation. In terms of processing, sumoylation at Lys-277 and Lys-293 negatively regulates its transcriptional activity. Sumoylation at Lys-703 positively regulates its transcriptional activity in the presence of RWDD3. Sumoylation at Lys-277 and Lys-293 is dispensable whereas sumoylation at Lys-703 is critical for the stimulatory effect of RWDD3 on its transcriptional activity. Heat shock increases sumoylation in a RWWD3-dependent manner.

The protein resides in the cytoplasm. Its subcellular location is the nucleus. It localises to the mitochondrion. It is found in the cytoskeleton. The protein localises to the spindle. The protein resides in the microtubule organizing center. Its subcellular location is the centrosome. It localises to the chromosome. It is found in the nucleoplasm. Receptor for glucocorticoids (GC). Has a dual mode of action: as a transcription factor that binds to glucocorticoid response elements (GRE), both for nuclear and mitochondrial DNA, and as a modulator of other transcription factors. Affects inflammatory responses, cellular proliferation and differentiation in target tissues. Involved in chromatin remodeling. Plays a role in rapid mRNA degradation by binding to the 5' UTR of target mRNAs and interacting with PNRC2 in a ligand-dependent manner which recruits the RNA helicase UPF1 and the mRNA-decapping enzyme DCP1A, leading to RNA decay. Could act as a coactivator for STAT5-dependent transcription upon growth hormone (GH) stimulation and could reveal an essential role of hepatic GR in the control of body growth. Mediates glucocorticoid-induced apoptosis. Promotes accurate chromosome segregation during mitosis. May act as a tumor suppressor. May play a negative role in adipogenesis through the regulation of lipolytic and antilipogenic gene expression. The sequence is that of Glucocorticoid receptor (NR3C1) from Aotus nancymaae (Ma's night monkey).